Consider the following 81-residue polypeptide: uncharacterized protein (81 aa).

The protein belongs to the ycf70 family.

The protein resides in the plastid. Its subcellular location is the chloroplast. This is an uncharacterized protein from Saccharum officinarum (Sugarcane).